A 129-amino-acid chain; its full sequence is Large ribosomal subunit protein bL17 (129 aa).

It belongs to the bacterial ribosomal protein bL17 family. As to quaternary structure, part of the 50S ribosomal subunit. Contacts protein L32.

This chain is Large ribosomal subunit protein bL17, found in Pasteurella multocida (strain Pm70).